The chain runs to 300 residues: Protein orai (300 aa).

Residues 1-128 lie on the Cytoplasmic side of the membrane; sequence MPRSHDPSRV…SKAQLKASSR (128 aa). The interval 58-82 is disordered; sequence QPPSSGGGSRNVGGGDGAAGNSKNG. A compositionally biased stretch (gly residues) spans 62–75; the sequence is SGGGSRNVGGGDGA. A helical membrane pass occupies residues 129–146; the sequence is TSALLAGFAMVCLVELQY. The Extracellular portion of the chain corresponds to 147 to 153; it reads DDSTSKP. The helical transmembrane segment at 154 to 174 threads the bilayer; it reads LLIVLGVVTSLLVSVHLLALM. Residues 175–205 are Cytoplasmic-facing; the sequence is MSTCILPYMEATGCTQDSPHLKLKFYIDLSW. Residues 206–226 traverse the membrane as a helical segment; the sequence is LFSTCIGLLLFLVEIGVIFYV. Topologically, residues 227 to 237 are extracellular; it reads KFTAVGYPTAG. A helical transmembrane segment spans residues 238 to 258; sequence YITTAMLIPVGIVFVLFSYLI. The Cytoplasmic portion of the chain corresponds to 259 to 300; that stretch reads HKNRVSHSLGRFKDKVDTMKQFLDVEANLQKSTIAPSTIRDI.

Belongs to the Orai family.

The protein resides in the membrane. Its function is as follows. Ca(2+) release-activated Ca(2+)-like (CRAC-like) channel subunit which mediates Ca(2+) influx and increase in Ca(2+)-selective current by synergy with the Ca(2+) sensor, stim-1. Required for Ca(2+) and IP3-dependent contractile activity of sheath cells and the spermatheca. Affects brood size and somatic cell function. The chain is Protein orai (orai-1) from Caenorhabditis briggsae.